We begin with the raw amino-acid sequence, 170 residues long: Protein SprT (170 aa).

The region spanning 19-163 is the SprT-like domain; the sequence is REKLQQANLR…RCLHCGTSLR (145 aa). His78 contacts Zn(2+). Glu79 is a catalytic residue. His82 is a binding site for Zn(2+).

The protein belongs to the SprT family. Zn(2+) serves as cofactor.

It localises to the cytoplasm. The polypeptide is Protein SprT (Erwinia tasmaniensis (strain DSM 17950 / CFBP 7177 / CIP 109463 / NCPPB 4357 / Et1/99)).